The primary structure comprises 209 residues: Pyridoxine/pyridoxamine 5'-phosphate oxidase (209 aa).

Residues 5-8 and K63 contribute to the substrate site; that span reads REEY. FMN contacts are provided by residues 58 to 63, 73 to 74, R79, K80, and Q102; these read RVVLLK and FT. Y120, R124, and S128 together coordinate substrate. FMN-binding positions include 137-138 and W181; that span reads QS. 187-189 provides a ligand contact to substrate; the sequence is RLH. Residue R191 coordinates FMN.

It belongs to the pyridoxamine 5'-phosphate oxidase family. As to quaternary structure, homodimer. FMN is required as a cofactor.

It carries out the reaction pyridoxamine 5'-phosphate + O2 + H2O = pyridoxal 5'-phosphate + H2O2 + NH4(+). It catalyses the reaction pyridoxine 5'-phosphate + O2 = pyridoxal 5'-phosphate + H2O2. It participates in cofactor metabolism; pyridoxal 5'-phosphate salvage; pyridoxal 5'-phosphate from pyridoxamine 5'-phosphate: step 1/1. The protein operates within cofactor metabolism; pyridoxal 5'-phosphate salvage; pyridoxal 5'-phosphate from pyridoxine 5'-phosphate: step 1/1. Catalyzes the oxidation of either pyridoxine 5'-phosphate (PNP) or pyridoxamine 5'-phosphate (PMP) into pyridoxal 5'-phosphate (PLP). In Alcanivorax borkumensis (strain ATCC 700651 / DSM 11573 / NCIMB 13689 / SK2), this protein is Pyridoxine/pyridoxamine 5'-phosphate oxidase.